A 237-amino-acid chain; its full sequence is Phosphoribosylaminoimidazole-succinocarboxamide synthase (237 aa).

Belongs to the SAICAR synthetase family.

It catalyses the reaction 5-amino-1-(5-phospho-D-ribosyl)imidazole-4-carboxylate + L-aspartate + ATP = (2S)-2-[5-amino-1-(5-phospho-beta-D-ribosyl)imidazole-4-carboxamido]succinate + ADP + phosphate + 2 H(+). It functions in the pathway purine metabolism; IMP biosynthesis via de novo pathway; 5-amino-1-(5-phospho-D-ribosyl)imidazole-4-carboxamide from 5-amino-1-(5-phospho-D-ribosyl)imidazole-4-carboxylate: step 1/2. The chain is Phosphoribosylaminoimidazole-succinocarboxamide synthase from Oceanobacillus iheyensis (strain DSM 14371 / CIP 107618 / JCM 11309 / KCTC 3954 / HTE831).